Consider the following 100-residue polypeptide: Integration host factor subunit beta (100 aa).

Residues 81-100 are disordered; the sequence is KPGKELRDRVNEDEHEEAHT. A compositionally biased stretch (basic and acidic residues) spans 82–100; that stretch reads PGKELRDRVNEDEHEEAHT.

This sequence belongs to the bacterial histone-like protein family. Heterodimer of an alpha and a beta chain.

Functionally, this protein is one of the two subunits of integration host factor, a specific DNA-binding protein that functions in genetic recombination as well as in transcriptional and translational control. The chain is Integration host factor subunit beta (ihfB) from Pseudomonas putida (Arthrobacter siderocapsulatus).